The primary structure comprises 394 residues: Aspergillopepsin-1 (394 aa).

Residues 1 to 20 form the signal peptide; sequence MVVFSKTAALVLGLSSAVSA. Positions 21–69 are cleaved as a propeptide — activation peptide; the sequence is APAPTRKGFTINQIARPANKTRTINLPGMYARSLAKFGGTVPQSVKEAA. The Peptidase A1 domain maps to 85–391; the sequence is YLTPVTVGKS…NSEGPKLGFA (307 aa). Residues aspartate 101 and aspartate 283 contribute to the active site. Cysteine 319 and cysteine 354 are oxidised to a cystine.

This sequence belongs to the peptidase A1 family. In terms of assembly, monomer.

It localises to the secreted. It catalyses the reaction Hydrolysis of proteins with broad specificity. Generally favors hydrophobic residues in P1 and P1', but also accepts Lys in P1, which leads to activation of trypsinogen. Does not clot milk.. Functionally, secreted aspartic endopeptidase that allows assimilation of proteinaceous substrates. The scissile peptide bond is attacked by a nucleophilic water molecule activated by two aspartic residues in the active site. Shows a broad primary substrate specificity. Favors hydrophobic residues at the P1 and P1' positions, but also accepts a lysine residue in the P1 position, leading to the activation of trypsinogen and chymotrypsinogen A. In Aspergillus niger (strain ATCC MYA-4892 / CBS 513.88 / FGSC A1513), this protein is Aspergillopepsin-1 (pepA).